Consider the following 363-residue polypeptide: Outer membrane porin F (363 aa).

An N-terminal signal peptide occupies residues 1–22 (MMKRKILAAVIPALLAAATANA).

Belongs to the Gram-negative porin family. As to quaternary structure, homotrimer. Forms mixed heterotrimers with OmpC and with PhoE; other mixed heterotrimers with other porins are also probable.

The protein localises to the cell outer membrane. In terms of biological role, forms pores that allow passive diffusion of small molecules across the outer membrane. The sequence is that of Outer membrane porin F from Salmonella typhimurium (strain SL1344).